The following is a 464-amino-acid chain: Fumarate hydratase class II (464 aa).

Substrate-binding positions include 98-100 (SGT), 129-132 (HPND), 139-141 (SSN), and T187. H188 functions as the Proton donor/acceptor in the catalytic mechanism. The active site involves S318. Substrate contacts are provided by residues S319 and 324 to 326 (KVN).

The protein belongs to the class-II fumarase/aspartase family. Fumarase subfamily. In terms of assembly, homotetramer.

It is found in the cytoplasm. It carries out the reaction (S)-malate = fumarate + H2O. It functions in the pathway carbohydrate metabolism; tricarboxylic acid cycle; (S)-malate from fumarate: step 1/1. Involved in the TCA cycle. Catalyzes the stereospecific interconversion of fumarate to L-malate. The protein is Fumarate hydratase class II of Haemophilus influenzae (strain ATCC 51907 / DSM 11121 / KW20 / Rd).